The chain runs to 85 residues: Small ribosomal subunit protein bS16 (85 aa).

This sequence belongs to the bacterial ribosomal protein bS16 family.

This Acinetobacter baylyi (strain ATCC 33305 / BD413 / ADP1) protein is Small ribosomal subunit protein bS16.